The chain runs to 195 residues: MKSKGVESRKRLLKAAANEFSVRGFHDAKVSEIVKKAGFTQPSFYLYFQSKEAIFAELITDFHSRVRKLTESLLLENGLNTEDVSKRVLLAVETVFQFLDEDKDLTKIGFFLNPEAKQMKKDLAMVLKENLEAEQRLGYFHSELDMETVAECLVGMIEHLTESFLLTGIKDPASLAAEVVNLLIYGMLPKGNDVR.

Residues 6 to 66 (VESRKRLLKA…ELITDFHSRV (61 aa)) enclose the HTH tetR-type domain. Positions 29 to 48 (KVSEIVKKAGFTQPSFYLYF) form a DNA-binding region, H-T-H motif.

This is an uncharacterized protein from Bacillus subtilis (strain 168).